A 467-amino-acid chain; its full sequence is 2-succinylbenzoate--CoA ligase (467 aa).

The protein belongs to the ATP-dependent AMP-binding enzyme family. MenE subfamily.

It catalyses the reaction 2-succinylbenzoate + ATP + CoA = 2-succinylbenzoyl-CoA + AMP + diphosphate. The protein operates within quinol/quinone metabolism; 1,4-dihydroxy-2-naphthoate biosynthesis; 1,4-dihydroxy-2-naphthoate from chorismate: step 5/7. It participates in quinol/quinone metabolism; menaquinone biosynthesis. Functionally, converts 2-succinylbenzoate (OSB) to 2-succinylbenzoyl-CoA (OSB-CoA). In Listeria innocua serovar 6a (strain ATCC BAA-680 / CLIP 11262), this protein is 2-succinylbenzoate--CoA ligase.